The following is a 225-amino-acid chain: Ribonuclease 3 (225 aa).

Residues 4-127 (IEKLEQSLTY…IIGAIHLEAG (124 aa)) form the RNase III domain. Glutamate 40 lines the Mg(2+) pocket. The active site involves aspartate 44. Mg(2+)-binding residues include aspartate 113 and glutamate 116. Glutamate 116 is an active-site residue. A DRBM domain is found at 154 to 223 (DYKTKLQEIT…AKIALEKLGS (70 aa)).

The protein belongs to the ribonuclease III family. As to quaternary structure, homodimer. Mg(2+) serves as cofactor.

It localises to the cytoplasm. The catalysed reaction is Endonucleolytic cleavage to 5'-phosphomonoester.. In terms of biological role, digests double-stranded RNA. Involved in the processing of primary rRNA transcript to yield the immediate precursors to the large and small rRNAs (23S and 16S). Processes some mRNAs, and tRNAs when they are encoded in the rRNA operon. Processes pre-crRNA and tracrRNA of type II CRISPR loci if present in the organism. The sequence is that of Ribonuclease 3 from Campylobacter jejuni subsp. doylei (strain ATCC BAA-1458 / RM4099 / 269.97).